We begin with the raw amino-acid sequence, 449 residues long: Cysteine--tRNA ligase (449 aa).

Cys-29 is a binding site for Zn(2+). Residues 31–41 (PTVYDHLHIGN) carry the 'HIGH' region motif. Zn(2+) is bound by residues Cys-211, His-236, and Glu-240. Positions 269 to 273 (KMSKS) match the 'KMSKS' region motif. Lys-272 contacts ATP.

The protein belongs to the class-I aminoacyl-tRNA synthetase family. In terms of assembly, monomer. It depends on Zn(2+) as a cofactor.

The protein resides in the cytoplasm. The catalysed reaction is tRNA(Cys) + L-cysteine + ATP = L-cysteinyl-tRNA(Cys) + AMP + diphosphate. The chain is Cysteine--tRNA ligase from Methylocella silvestris (strain DSM 15510 / CIP 108128 / LMG 27833 / NCIMB 13906 / BL2).